A 418-amino-acid chain; its full sequence is Secreted beta-glucosidase SUN41 (418 aa).

A signal peptide spans 1 to 23; the sequence is MRFSQATVLAFAALSLAAPAFEA. Over residues 81–97 the composition is skewed to low complexity; the sequence is SEETSSTSTSISSTTTI. The disordered stretch occupies residues 81 to 150; sequence SEETSSTSTS…SGSTNGIEGD (70 aa). The N-linked (GlcNAc...) asparagine glycan is linked to Asn100. Polar residues predominate over residues 112 to 126; it reads SLPSGTIKPSSFATE. Positions 127–136 are enriched in low complexity; it reads SQSQSQSSST.

It belongs to the SUN family. In terms of processing, predicted to be a substrate for cleavage by KEX2.

It localises to the secreted. The protein localises to the cell wall. Functionally, cell surface beta-glucosidase involved in cytokinesis, cell wall biogenesis, adhesion to host tissue, and biofilm formation; thus playing an important role in the host-pathogen interaction. Has hydrolytic activity on linear (1-&gt;3)-beta-D-glucans such as laminaribiose and other laminarioligosaccharides. In Candida albicans (strain SC5314 / ATCC MYA-2876) (Yeast), this protein is Secreted beta-glucosidase SUN41.